Consider the following 157-residue polypeptide: SsrA-binding protein (157 aa).

Residues 133 to 157 (LHDKRESEKKRDWGREKGRLLRARG) form a disordered region. A compositionally biased stretch (basic and acidic residues) spans 135 to 151 (DKRESEKKRDWGREKGR).

The protein belongs to the SmpB family.

It is found in the cytoplasm. In terms of biological role, required for rescue of stalled ribosomes mediated by trans-translation. Binds to transfer-messenger RNA (tmRNA), required for stable association of tmRNA with ribosomes. tmRNA and SmpB together mimic tRNA shape, replacing the anticodon stem-loop with SmpB. tmRNA is encoded by the ssrA gene; the 2 termini fold to resemble tRNA(Ala) and it encodes a 'tag peptide', a short internal open reading frame. During trans-translation Ala-aminoacylated tmRNA acts like a tRNA, entering the A-site of stalled ribosomes, displacing the stalled mRNA. The ribosome then switches to translate the ORF on the tmRNA; the nascent peptide is terminated with the 'tag peptide' encoded by the tmRNA and targeted for degradation. The ribosome is freed to recommence translation, which seems to be the essential function of trans-translation. The protein is SsrA-binding protein of Nitrobacter winogradskyi (strain ATCC 25391 / DSM 10237 / CIP 104748 / NCIMB 11846 / Nb-255).